The primary structure comprises 270 residues: MKMTSKKMKDELMKKLSRPEWDCHYDSEKEVLRIEQTDSKKGINVSLPGVVAKWEVNKEKAIEEVAYYVQEALIAMHKEENSMAKILPVIRSTSFPKQSEEGNPFIMTDHTAETRIYYALDSNKTYRLIDERLLQKLELTEEQVREMALFNARSLGYEFKQETVAGNTFYFLNTNDGYDASRILNESLLHSMREKISGDMVVAVPHQDVLIIADIVNEIGYDIIAQMTMKFFAEGHVPITSLSFVYEDGDFEPIFILAKNRKKTDGKEKG.

It belongs to the UPF0354 family.

This is UPF0354 protein BcerKBAB4_4524 from Bacillus mycoides (strain KBAB4) (Bacillus weihenstephanensis).